A 469-amino-acid polypeptide reads, in one-letter code: uncharacterized protein (469 aa).

Disordered regions lie at residues 248–314 (RDDN…EPES) and 327–418 (QMDQ…PRPT). Polar residues-rich tracts occupy residues 292-305 (ESSN…NAAS) and 350-365 (TARQ…PNTV). The span at 366–377 (TATSASTPASTS) shows a compositional bias: low complexity.

This is an uncharacterized protein from Cryphonectria parasitica (Chestnut blight fungus).